The sequence spans 411 residues: Short chain dehydrogenase ausT (411 aa).

NADP(+) contacts are provided by D105, Q137, Y249, and R253. Y249 serves as the catalytic Proton donor. The Proton donor role is filled by Y263.

This sequence belongs to the short-chain dehydrogenases/reductases (SDR) family.

It participates in secondary metabolite biosynthesis; terpenoid biosynthesis. Functionally, short chain dehydrogenase; part of the gene cluster that mediates the biosynthesis of calidodehydroaustin, a fungal meroterpenoid. The first step of the pathway is the synthesis of 3,5-dimethylorsellinic acid by the polyketide synthase ausA. 3,5-dimethylorsellinic acid is then prenylated by the polyprenyl transferase ausN. Further epoxidation by the FAD-dependent monooxygenase ausM and cyclization by the probable terpene cyclase ausL lead to the formation of protoaustinoid A. Protoaustinoid A is then oxidized to spiro-lactone preaustinoid A3 by the combined action of the FAD-binding monooxygenases ausB and ausC, and the dioxygenase ausE. Acid-catalyzed keto-rearrangement and ring contraction of the tetraketide portion of preaustinoid A3 by ausJ lead to the formation of preaustinoid A4. The aldo-keto reductase ausK, with the help of ausH, is involved in the next step by transforming preaustinoid A4 into isoaustinone which is in turn hydroxylated by the P450 monooxygenase ausI to form austinolide. The cytochrome P450 monooxygenase ausG modifies austinolide to austinol. Austinol is further acetylated to austin by the O-acetyltransferase ausP, which spontaneously changes to dehydroaustin. The cytochrome P450 monooxygenase ausR then converts dehydroaustin is into 7-dehydrodehydroaustin. The hydroxylation catalyzed by ausR permits the O-acetyltransferase ausQ to add an additional acetyl group to the molecule, leading to the formation of acetoxydehydroaustin. The short chain dehydrogenase ausT catalyzes the reduction of the double bond present between carbon atoms 1 and 2 to convert 7-dehydrodehydroaustin into 1,2-dihydro-7-hydroxydehydroaustin. AusQ catalyzes not only an acetylation reaction but also the addition of the PKS ausV diketide product to 1,2-dihydro-7-hydroxydehydroaustin, forming precalidodehydroaustin. Finally, the iron/alpha-ketoglutarate-dependent dioxygenase converts precalidodehydroaustin into calidodehydroaustin. The chain is Short chain dehydrogenase ausT from Aspergillus calidoustus.